Reading from the N-terminus, the 342-residue chain is Glycerol-3-phosphate dehydrogenase [NAD(P)+] (342 aa).

Residues S13, W14, and K108 each contribute to the NADPH site. 3 residues coordinate sn-glycerol 3-phosphate: K108, G139, and S141. A143 contacts NADPH. 5 residues coordinate sn-glycerol 3-phosphate: K194, D247, S257, R258, and N259. K194 functions as the Proton acceptor in the catalytic mechanism. R258 provides a ligand contact to NADPH. Residues V282 and E284 each coordinate NADPH.

It belongs to the NAD-dependent glycerol-3-phosphate dehydrogenase family.

It is found in the cytoplasm. The enzyme catalyses sn-glycerol 3-phosphate + NAD(+) = dihydroxyacetone phosphate + NADH + H(+). The catalysed reaction is sn-glycerol 3-phosphate + NADP(+) = dihydroxyacetone phosphate + NADPH + H(+). Its pathway is membrane lipid metabolism; glycerophospholipid metabolism. Its function is as follows. Catalyzes the reduction of the glycolytic intermediate dihydroxyacetone phosphate (DHAP) to sn-glycerol 3-phosphate (G3P), the key precursor for phospholipid synthesis. The sequence is that of Glycerol-3-phosphate dehydrogenase [NAD(P)+] from Lactococcus lactis subsp. cremoris (strain SK11).